Here is a 488-residue protein sequence, read N- to C-terminus: MELIREARPHSREKLKSNLIEWFHWLLREAELYDVRYPVKGAYVWRPYGMKIRRNVENLIRKFHDETGHEEVLFPVFIPYEFFGKESQHIKGFEKEVFWVSKGGEAGERLVLRPTSETAIMPMVKLWIQDYKDLPLRVYQIVSVFRAETKMTHPMIRLREISMFKEAHTVHADKEDAERQVREAVEIYKRIFDEMCLAYLINKRPEWDKFAGAEYTIAFDTILPDGRSLQIGTVHYLGTNFTKVFEVTYLDADGTRKLAHTTSYGISERSIAAMLITHGDDGGTTLPPKLAPIQVVVIPIYYGEEEAPLVMPLVRETANRLNEAGIRVYVDERADKTPGWKFYYWELKGVPLRVEIGKRDVEKRQAVIARRDTLEKYAVSINELVDAVKQLMKSVEENLRKRAWEELKGRVVKAEDIEVAKAAIKEGKVVEIPWSGDNDCGIKIQELVGADALGIPLDADASVGGYDLRDLACKERRAELWLRLSERY.

The protein belongs to the class-II aminoacyl-tRNA synthetase family. ProS type 3 subfamily. In terms of assembly, homodimer.

It localises to the cytoplasm. It carries out the reaction tRNA(Pro) + L-proline + ATP = L-prolyl-tRNA(Pro) + AMP + diphosphate. Catalyzes the attachment of proline to tRNA(Pro) in a two-step reaction: proline is first activated by ATP to form Pro-AMP and then transferred to the acceptor end of tRNA(Pro). The chain is Proline--tRNA ligase from Pyrobaculum aerophilum (strain ATCC 51768 / DSM 7523 / JCM 9630 / CIP 104966 / NBRC 100827 / IM2).